The primary structure comprises 97 residues: MDFNASLRRAIKTGDVILGQNNTEKCIKEGKAQMVVIAANCPENFRSQLGSYENLFIHTFEGSSVALGKACGKPFMVSTLAIVSPGESDILSLKRTA.

Belongs to the eukaryotic ribosomal protein eL30 family.

This Methanoregula boonei (strain DSM 21154 / JCM 14090 / 6A8) protein is Large ribosomal subunit protein eL30.